The following is a 262-amino-acid chain: Glutamate racemase (262 aa).

Substrate contacts are provided by residues 5-6 and 37-38; these read DS and YG. Catalysis depends on C69, which acts as the Proton donor/acceptor. Substrate is bound at residue 70-71; the sequence is NT. The active-site Proton donor/acceptor is the C181. A substrate-binding site is contributed by 182–183; that stretch reads TH.

Belongs to the aspartate/glutamate racemases family.

The enzyme catalyses L-glutamate = D-glutamate. It participates in cell wall biogenesis; peptidoglycan biosynthesis. Functionally, provides the (R)-glutamate required for cell wall biosynthesis. The sequence is that of Glutamate racemase from Buchnera aphidicola subsp. Acyrthosiphon pisum (strain Tuc7).